Here is a 780-residue protein sequence, read N- to C-terminus: Aconitate hydratase, mitochondrial (780 aa).

The transit peptide at 1–27 (MAPYSLLVSRLQKALGARQYHVASVLC) directs the protein to the mitochondrion. Position 31 is an N6-succinyllysine (Lys31). Residue Lys50 is modified to N6-acetyllysine; alternate. Lys50 bears the N6-succinyllysine; alternate mark. Gln99 serves as a coordination point for substrate. An N6-acetyllysine; alternate mark is found at Lys138 and Lys144. N6-succinyllysine; alternate occurs at positions 138 and 144. 192–194 (DSH) lines the substrate pocket. The residue at position 233 (Lys233) is an N6-acetyllysine; alternate. Lys233 bears the N6-succinyllysine; alternate mark. [4Fe-4S] cluster is bound at residue Cys385. The residue at position 411 (Lys411) is an N6-succinyllysine. [4Fe-4S] cluster contacts are provided by Cys448 and Cys451. Arg474 and Arg479 together coordinate substrate. An N6-acetyllysine; alternate mark is found at Lys517 and Lys523. N6-succinyllysine; alternate is present on residues Lys517 and Lys523. Residues 524–537 (LEAPDADELPRAEF) show a composition bias toward basic and acidic residues. The disordered stretch occupies residues 524–560 (LEAPDADELPRAEFDPGQDTYQHPPKDSSGQQVDVSP). Position 549 is an N6-succinyllysine (Lys549). The segment covering 551–560 (SSGQQVDVSP) has biased composition (polar residues). Phosphoserine is present on Ser559. N6-acetyllysine; alternate is present on Lys573. Lys573 is subject to N6-succinyllysine; alternate. N6-succinyllysine is present on Lys591. An N6-acetyllysine; alternate modification is found at Lys605. Lys605 bears the N6-succinyllysine; alternate mark. Arg607 is a binding site for substrate. Lys628 is subject to N6-succinyllysine. Ser670 carries the post-translational modification Phosphoserine. Substrate is bound at residue 670–671 (SR). Lys689 is subject to N6-succinyllysine. Lys723 and Lys730 each carry N6-acetyllysine; alternate. N6-succinyllysine; alternate is present on residues Lys723 and Lys730. N6-acetyllysine occurs at positions 736 and 743.

It belongs to the aconitase/IPM isomerase family. Monomer. The cofactor is [4Fe-4S] cluster. In terms of processing, forms covalent cross-links mediated by transglutaminase TGM2, between a glutamine and the epsilon-amino group of a lysine residue, forming homopolymers and heteropolymers.

The protein localises to the mitochondrion. It catalyses the reaction citrate = D-threo-isocitrate. It participates in carbohydrate metabolism; tricarboxylic acid cycle; isocitrate from oxaloacetate: step 2/2. In terms of biological role, catalyzes the isomerization of citrate to isocitrate via cis-aconitate. The chain is Aconitate hydratase, mitochondrial (ACO2) from Bos taurus (Bovine).